Reading from the N-terminus, the 279-residue chain is Acyl-coenzyme A thioesterase MBLAC2 (279 aa).

N-acetylserine is present on serine 2. Residues histidine 83, histidine 85, aspartate 87, histidine 88, histidine 170, aspartate 189, and histidine 231 each coordinate Zn(2+). A lipid anchor (S-palmitoyl cysteine) is attached at cysteine 254.

This sequence belongs to the metallo-beta-lactamase superfamily. Glyoxalase II family. Zn(2+) serves as cofactor. In terms of processing, palmitoylated on Cys-254 by ZDHHC20.

Its subcellular location is the endoplasmic reticulum membrane. The protein resides in the cell membrane. It carries out the reaction hexadecanoyl-CoA + H2O = hexadecanoate + CoA + H(+). The enzyme catalyses dodecanoyl-CoA + H2O = dodecanoate + CoA + H(+). The catalysed reaction is tetradecanoyl-CoA + H2O = tetradecanoate + CoA + H(+). It catalyses the reaction octadecanoyl-CoA + H2O = octadecanoate + CoA + H(+). It carries out the reaction a beta-lactam + H2O = a substituted beta-amino acid. In terms of biological role, acyl-CoA thioesterases are a group of enzymes that catalyze the hydrolysis of acyl-CoAs to the free fatty acid and coenzyme A (CoASH), providing the potential to regulate intracellular levels of acyl-CoAs, free fatty acids and CoASH. Has an acyl-CoA thioesterase activity towards the long chain fatty acyl-CoA thioester palmitoyl-CoA (hexadecanoyl-CoA; C16:0-CoA). Displays a substrate preference for fatty acyl-CoAs with chain-lengths C12-C18. The polypeptide is Acyl-coenzyme A thioesterase MBLAC2 (MBLAC2) (Bos taurus (Bovine)).